Here is a 587-residue protein sequence, read N- to C-terminus: DELLA protein GAIP-B (587 aa).

The tract at residues 1-23 (MKREHHHLHPRPDPPSMAAAPNG) is disordered. A DELLA motif motif is present at residues 46–50 (DELLA). The GRAS domain occupies 209–577 (VDSQENGIQL…RPLIVTSAWK (369 aa)). A leucine repeat I (LRI) region spans residues 216 to 270 (IQLVHALMACAEAVQQNNLNLAEALEKRIGYLAVSQAGAMRKVATFFAEALARRI). A VHIID region spans residues 288–353 (QLHFYESSPY…SGPPAFRLTG (66 aa)). A VHIID motif is present at residues 319–323 (VHVID). The segment at 367–399 (DVGWKLAKLVETINVEFEYRGFVANSLADLDAS) is leucine repeat II (LRII). The PFYRE stretch occupies residues 411–498 (VVVNSVFELH…EMYLGKQICN (88 aa)). An LXXLL motif motif is present at residues 419–423 (LHKLL). The interval 501-577 (ACEGSDRVEW…RPLIVTSAWK (77 aa)) is SAW.

Belongs to the GRAS family. DELLA subfamily. In terms of processing, phosphorylated. Ubiquitinated. Upon GA application it is ubiquitinated, leading to its subsequent degradation.

It localises to the nucleus. In terms of biological role, probable transcriptional regulator that acts as a repressor of the gibberellin (GA) signaling pathway. Probably acts by participating in large multiprotein complexes that represses transcription of GA-inducible genes. Upon GA application, it is degraded by the proteasome, allowing the GA signaling pathway. The protein is DELLA protein GAIP-B (GAIPB) of Cucurbita maxima (Pumpkin).